Here is a 1368-residue protein sequence, read N- to C-terminus: Indole-3-acetaldehyde oxidase (1368 aa).

The 2Fe-2S ferredoxin-type domain occupies 19–108 (TSLVFAINGQ…GCSITTSDGL (90 aa)). Cys60, Cys65, and Cys68 together coordinate [2Fe-2S] cluster. In terms of domain architecture, FAD-binding PCMH-type spans 246-427 (LHSRKYRWSS…LSLEIPSWHS (182 aa)).

Belongs to the xanthine dehydrogenase family. Aldehyde oxidases (AO) are homodimers and heterodimers of AO subunits. AO-alpha is an AAO1 homodimer; AO-beta is an AAO1-AAO2 heterodimer. The cofactor is [2Fe-2S] cluster. FAD is required as a cofactor. It depends on Mo-molybdopterin as a cofactor. Predominantly expressed in roots, seedlings, mature siliques and seeds, and to lower extent in stems and rosettes. In seedlings, mostly expressed in lower part of hypocotyls and roots.

The protein localises to the cytoplasm. The enzyme catalyses indole-3-acetaldehyde + O2 + H2O = (indol-3-yl)acetate + H2O2 + H(+). Strongly inhibited by iodoacetate and potassium cyanide (KCN). Weakly inhibited by 2-mercaptoethanol, dithiothreitol (DTT), menadione, estradiol, 4'-(9-acridinylamino)methanesulfon-m-anisidine (mAMSA), allopurinol and tritonX-100. Not affected by p-chloromercuribenzoate. In terms of biological role, in higher plants aldehyde oxidases (AO) appear to be homo- and heterodimeric assemblies of AO subunits with probably different physiological functions. AO-alpha may be involved in the biosynthesis of auxin, and in biosynthesis of abscisic acid (ABA) in seeds. In vitro, AO-alpha uses heptaldehyde, protocatechualdehyde, benzaldehyde, indole-3-aldehyde (IAld), indole-3-acetaldehyde (IAAld), cinnamaldehyde and citral as substrates; AO-beta uses IAAld, IAld and naphtaldehyde as substrates. This is Indole-3-acetaldehyde oxidase (AAO1) from Arabidopsis thaliana (Mouse-ear cress).